A 64-amino-acid polypeptide reads, in one-letter code: Bacteriocin plantaricin ASM1 (64 aa).

The N-terminal stretch at 1 to 21 is a signal peptide; sequence MSKLVKTLTVDEISKIQTNGG. A cross-link (lanthionine (Ser-Cys)) is located at residues 61–64; the sequence is SYHC.

Post-translationally, contains 2 disulfide bonds.

It is found in the secreted. Bacteriocin with a narrow antibacterial spectrum. Antibacterial activity against the Gram-positive bacteria L.plantarun, L.pentosus, L.curvatus, L.lindneri, L.mesenteroides and E.faecilis. Lacks antibacterial activity against the Gram-positive bacteria L.brevis, L.sakei, L.lactis, P.acidilactici, B.subtilis, B.cereus, L.monocytogenes and S.aureus, and against the Gram-negative bacteria E.coli and S.typhimurium. The protein is Bacteriocin plantaricin ASM1 of Lactiplantibacillus plantarum (Lactobacillus plantarum).